A 66-amino-acid chain; its full sequence is Large ribosomal subunit protein bL35c (66 aa).

Belongs to the bacterial ribosomal protein bL35 family.

The protein localises to the plastid. Its subcellular location is the chloroplast. The protein is Large ribosomal subunit protein bL35c of Gracilaria tenuistipitata var. liui (Red alga).